We begin with the raw amino-acid sequence, 335 residues long: Cathepsin B (335 aa).

A signal peptide spans 1–17; the sequence is MWRLLATLSCLVLLTSA. The propeptide at 18-79 is activation peptide; the sequence is RESLHFQPLS…QRAAFAADMI (62 aa). Disulfide bonds link Cys93–Cys122, Cys105–Cys150, Cys141–Cys207, Cys142–Cys146, Cys179–Cys211, and Cys187–Cys198. The active site involves Cys108. Asn192 carries N-linked (GlcNAc...) asparagine glycosylation. Lys220 carries the post-translational modification N6-acetyllysine. Cys227 and Cys331 are disulfide-bonded. Residues His278 and Asn298 contribute to the active site. Positions 333 to 335 are excised as a propeptide; that stretch reads PHF.

This sequence belongs to the peptidase C1 family. In terms of assembly, dimer of a heavy chain and a light chain cross-linked by a disulfide bond. Interacts with SRPX2. Directly interacts with SHKBP1. Expressed in heart (at protein level).

The protein localises to the lysosome. Its subcellular location is the melanosome. The protein resides in the secreted. It localises to the extracellular space. It is found in the apical cell membrane. The catalysed reaction is Hydrolysis of proteins with broad specificity for peptide bonds. Preferentially cleaves -Arg-Arg-|-Xaa bonds in small molecule substrates (thus differing from cathepsin L). In addition to being an endopeptidase, shows peptidyl-dipeptidase activity, liberating C-terminal dipeptides.. Functionally, thiol protease which is believed to participate in intracellular degradation and turnover of proteins. Cleaves matrix extracellular phosphoglycoprotein MEPE. Involved in the solubilization of cross-linked TG/thyroglobulin in the thyroid follicle lumen. Has also been implicated in tumor invasion and metastasis. The polypeptide is Cathepsin B (CTSB) (Sus scrofa (Pig)).